The following is a 133-amino-acid chain: Protransforming growth factor alpha (133 aa).

Residues 1–23 form the signal peptide; that stretch reads MVPSAGQLALFALGIFLAVCQAL. The propeptide at 24-38 is removed in mature form; that stretch reads ENSTSALSDPPVAAA. Topologically, residues 24–97 are extracellular; that stretch reads ENSTSALSDP…AVVAASQKKQ (74 aa). N-linked (GlcNAc...) asparagine glycosylation occurs at asparagine 25. The EGF-like domain occupies 42–82; that stretch reads HFNDCPDSHTQFCFHGTCRFLLQEEKPACVCHSGYVGARCE. Cystine bridges form between cysteine 46-cysteine 59, cysteine 54-cysteine 70, and cysteine 72-cysteine 81. The propeptide at 89 to 133 is removed in mature form; sequence VVAASQKKQAITALVVVTIVALAVLIITCVLIHCCEVRKHSVVVP. A helical membrane pass occupies residues 98-120; that stretch reads AITALVVVTIVALAVLIITCVLI. Residues 121–133 lie on the Cytoplasmic side of the membrane; the sequence is HCCEVRKHSVVVP.

In terms of assembly, interacts with the PDZ domains of MAGI3, SDCBP and SNTA1. The interaction with SDCBP, is required for the targeting to the cell surface. In the endoplasmic reticulum, in its immature form (i.e. with a prosegment and lacking full N-glycosylation), interacts with CNIH. In the Golgi apparatus, may form a complex with CNIH and GORASP2. Interacts (via cytoplasmic C-terminal domain) with NKD2. As to expression, skin.

Its subcellular location is the secreted. It localises to the extracellular space. The protein resides in the cell membrane. Functionally, TGF alpha is a mitogenic polypeptide that is able to bind to the EGF receptor/EGFR and to act synergistically with TGF beta to promote anchorage-independent cell proliferation in soft agar. The sequence is that of Protransforming growth factor alpha (TGFA) from Ovis aries (Sheep).